We begin with the raw amino-acid sequence, 102 residues long: Alpha-ketoglutarate dehydrogenase component 4 (102 aa).

Position 2 is an N-acetylglycine (Gly-2). Lys-4 is modified (N6-succinyllysine). The interval 23-70 is disordered; it reads KFPNRRDKPKLSASEALGSAALPSHSSAISQHSKGSTSPDLLMHQGPP. Residues 33 to 46 are compositionally biased toward low complexity; the sequence is LSASEALGSAALPS. Polar residues predominate over residues 47–61; it reads HSSAISQHSKGSTSP. Ser-48, Ser-60, and Ser-89 each carry phosphoserine.

This sequence belongs to the alpha-ketoglutarate dehydrogenase component 4 family. As to quaternary structure, component of the 2-oxoglutarate dehydrogenase complex (OGDHC), composed of OGDH (2-oxoglutarate dehydrogenase; also called E1 subunit), DLST (dihydrolipoamide succinyltransferase; also called E2 subunit) and DLD (dihydrolipoamide dehydrogenase; also called E3 subunit), and the assembly factor KGD4. Within OGDHC complex, interacts (via N-terminus) with E3 subunit and (via C-terminus) with E2 subunit.

It localises to the mitochondrion. Functionally, molecular adapter that is necessary to form a stable 2-oxoglutarate dehydrogenase enzyme complex (OGDHC). Enables the specific recruitment of E3 subunit to E2 subunit in the 2-oxoglutarate dehydrogenase complex (OGDHC). This Mus musculus (Mouse) protein is Alpha-ketoglutarate dehydrogenase component 4.